The sequence spans 226 residues: PKHD-type hydroxylase Bpet2704 (226 aa).

The 101-residue stretch at 78-178 (KIFPPLFNRY…RISAFFWMQS (101 aa)) folds into the Fe2OG dioxygenase domain. 3 residues coordinate Fe cation: histidine 96, aspartate 98, and histidine 159. 2-oxoglutarate is bound at residue arginine 169.

The cofactor is Fe(2+). Requires L-ascorbate as cofactor.

The polypeptide is PKHD-type hydroxylase Bpet2704 (Bordetella petrii (strain ATCC BAA-461 / DSM 12804 / CCUG 43448)).